The primary structure comprises 397 residues: Elongation factor Tu (397 aa).

A tr-type G domain is found at 10 to 207 (KPHVNIGTIG…AVDESIPEPV (198 aa)). The interval 19 to 26 (GHVDHGKT) is G1. 19-26 (GHVDHGKT) provides a ligand contact to GTP. Position 26 (T26) interacts with Mg(2+). Residues 63 to 67 (GITIN) are G2. The segment at 84–87 (DAPG) is G3. GTP-binding positions include 84-88 (DAPGH) and 139-142 (NKSD). The interval 139–142 (NKSD) is G4. A G5 region spans residues 177-179 (SGL).

This sequence belongs to the TRAFAC class translation factor GTPase superfamily. Classic translation factor GTPase family. EF-Tu/EF-1A subfamily. Monomer.

It is found in the cytoplasm. The catalysed reaction is GTP + H2O = GDP + phosphate + H(+). Functionally, GTP hydrolase that promotes the GTP-dependent binding of aminoacyl-tRNA to the A-site of ribosomes during protein biosynthesis. This Clavibacter sepedonicus (Clavibacter michiganensis subsp. sepedonicus) protein is Elongation factor Tu.